Consider the following 361-residue polypeptide: Phospho-N-acetylmuramoyl-pentapeptide-transferase (361 aa).

Transmembrane regions (helical) follow at residues 25 to 45, 73 to 93, 97 to 117, 134 to 154, 168 to 188, 200 to 220, 237 to 257, 264 to 284, 289 to 309, and 338 to 358; these read RTVLAALTALIISFIVGPAMI, TMGGALILVSIAITTLLWADL, YVWIVLITTLGFGMIGWVDDY, LFWQSAIAILVALYLVLTAEL, VAVPLGVTGFVALTYFVIVGT, GLAIMPTVMISSALAIFSYVA, AGELAVFCGALAGAGLAFLWF, VFMGDVGALALGAALGIVTVI, IVMLIMGGVFVVETLSVMLQV, and QVVVRFWIITMMLVLFGLSSL.

Belongs to the glycosyltransferase 4 family. MraY subfamily. Requires Mg(2+) as cofactor.

It localises to the cell inner membrane. It carries out the reaction UDP-N-acetyl-alpha-D-muramoyl-L-alanyl-gamma-D-glutamyl-meso-2,6-diaminopimeloyl-D-alanyl-D-alanine + di-trans,octa-cis-undecaprenyl phosphate = di-trans,octa-cis-undecaprenyl diphospho-N-acetyl-alpha-D-muramoyl-L-alanyl-D-glutamyl-meso-2,6-diaminopimeloyl-D-alanyl-D-alanine + UMP. The protein operates within cell wall biogenesis; peptidoglycan biosynthesis. In terms of biological role, catalyzes the initial step of the lipid cycle reactions in the biosynthesis of the cell wall peptidoglycan: transfers peptidoglycan precursor phospho-MurNAc-pentapeptide from UDP-MurNAc-pentapeptide onto the lipid carrier undecaprenyl phosphate, yielding undecaprenyl-pyrophosphoryl-MurNAc-pentapeptide, known as lipid I. This Nitrosospira multiformis (strain ATCC 25196 / NCIMB 11849 / C 71) protein is Phospho-N-acetylmuramoyl-pentapeptide-transferase.